A 423-amino-acid polypeptide reads, in one-letter code: AP-1 complex subunit mu-1 (423 aa).

S2 is modified (N-acetylserine). Phosphothreonine occurs at positions 152, 154, and 223. The MHD domain maps to 168-421 (KNEVFLDVIE…ITQNGDYQLR (254 aa)).

This sequence belongs to the adaptor complexes medium subunit family. In terms of assembly, adaptor protein complex 1 (AP-1) is a heterotetramer composed of two large adaptins (gamma-type subunit AP1G1 and beta-type subunit AP1B1), a medium adaptin (mu-type subunit AP1M1 or AP1M2) and a small adaptin (sigma-type subunit AP1S1 or AP1S2 or AP1S3). Interacts with MARCHF11. Phosphorylation of membrane-bound AP1M1/AP1M2 increases its affinity for sorting signals.

It is found in the golgi apparatus. It localises to the cytoplasmic vesicle. The protein resides in the clathrin-coated vesicle membrane. Its function is as follows. Subunit of clathrin-associated adaptor protein complex 1 that plays a role in protein sorting in the trans-Golgi network (TGN) and endosomes. The AP complexes mediate the recruitment of clathrin to membranes and the recognition of sorting signals within the cytosolic tails of transmembrane cargo molecules. This Mus musculus (Mouse) protein is AP-1 complex subunit mu-1 (Ap1m1).